The sequence spans 361 residues: Glutamate 5-kinase (361 aa).

Lys-7 lines the ATP pocket. Substrate is bound by residues Ser-47, Asp-134, and Asn-146. ATP is bound by residues 166–167 (TD) and 209–215 (TGGMTTK). The 72-residue stretch at 274–345 (LGTLQLDEGA…EAIETQMSTN (72 aa)) folds into the PUA domain.

It belongs to the glutamate 5-kinase family.

Its subcellular location is the cytoplasm. The catalysed reaction is L-glutamate + ATP = L-glutamyl 5-phosphate + ADP. The protein operates within amino-acid biosynthesis; L-proline biosynthesis; L-glutamate 5-semialdehyde from L-glutamate: step 1/2. In terms of biological role, catalyzes the transfer of a phosphate group to glutamate to form L-glutamate 5-phosphate. This Prochlorococcus marinus (strain MIT 9313) protein is Glutamate 5-kinase.